Consider the following 90-residue polypeptide: MSAVETSKKSEVVAQFARAANDTGSPEVQVALLTTRINELTVHFKAHTKDHHSRRGLLRMVSRRRKLLDYLKGKDADRYRALIEKLGLRK.

This sequence belongs to the universal ribosomal protein uS15 family. Part of the 30S ribosomal subunit. Forms a bridge to the 50S subunit in the 70S ribosome, contacting the 23S rRNA.

Its function is as follows. One of the primary rRNA binding proteins, it binds directly to 16S rRNA where it helps nucleate assembly of the platform of the 30S subunit by binding and bridging several RNA helices of the 16S rRNA. In terms of biological role, forms an intersubunit bridge (bridge B4) with the 23S rRNA of the 50S subunit in the ribosome. The chain is Small ribosomal subunit protein uS15 from Paraburkholderia xenovorans (strain LB400).